Reading from the N-terminus, the 484-residue chain is Cholesterol 22-hydroxylase CYP90B27 (484 aa).

Residues 2-22 form a helical membrane-spanning segment; it reads ALELILVLSSLIVILIIFFSF. Cysteine 429 is a binding site for heme.

It belongs to the cytochrome P450 family. Expressed in roots.

It localises to the membrane. The catalysed reaction is cholesterol + reduced [NADPH--hemoprotein reductase] + O2 = (22R)-hydroxycholesterol + oxidized [NADPH--hemoprotein reductase] + H2O + H(+). It functions in the pathway steroid metabolism; cholesterol metabolism. In terms of biological role, involved in the biosynthesis of steroidal saponins and alkaloids natural products from cholesterol such as spirostane-type saponins and polyphyllins, compounds with pharmacological activity. Catalyzes the C-22 hydroxylation of cholesterol to form 22R-hydroxycholesterol. The polypeptide is Cholesterol 22-hydroxylase CYP90B27 (Paris polyphylla (Daiswa polyphylla)).